Here is a 345-residue protein sequence, read N- to C-terminus: 3'-5' exoribonuclease 1 (345 aa).

Basic and acidic residues-rich tracts occupy residues 1–11 (MEDERGRERGG) and 19–46 (PRPE…ETDG). The disordered stretch occupies residues 1 to 50 (MEDERGRERGGDAAQQKTPRPECEESRPLSVEKKQRCRLDGKETDGSKFI). Phosphoserine occurs at positions 55 and 58. The SAP domain maps to 72 to 106 (INRMSKEELRAKLSEFKLETRGVKDVLKKRLKNYY). The 177-residue stretch at 126 to 302 (ICIIDFEATC…DDSKNIARIA (177 aa)) folds into the Exonuclease domain. Positions 130 and 132 each coordinate Mg(2+). The active-site Proton acceptor is Glu132. Residues Glu132 and Ala133 each contribute to the AMP site. Position 230 (Asp230) interacts with Mg(2+). The active-site Proton acceptor is His289. Residue His289 coordinates AMP. Asp294 is a Mg(2+) binding site.

Identified in a histone pre-mRNA complex, at least composed of ERI1, LSM11, SLBP, SNRPB, SYNCRIP and YBX1. Binds to 40S and 60S ribosomal subunits and to 80S assembled ribosomes. Interacts in a cooperative manner with SLBP to the mature 3'-end of histone mRNAs. Found in a ternary complex with SLBP and the stem-loop structure of the 3'-end of histone mRNAs. Mg(2+) serves as cofactor. As to expression, widely expressed with high levels in spleen, thymus and testis (at protein level).

It localises to the cytoplasm. The protein resides in the nucleus. It is found in the nucleolus. It carries out the reaction Exonucleolytic cleavage in the 3'- to 5'-direction to yield nucleoside 5'-phosphates.. Its activity is regulated as follows. Although it can bind simultaneously with SLBP to the 3'-end of histone mRNA, the presence of SLBP prevents the exonuclease activity. In terms of biological role, RNA exonuclease that binds to the 3'-end of histone mRNAs and degrades them, suggesting that it plays an essential role in histone mRNA decay after replication. A 2' and 3'-hydroxyl groups at the last nucleotide of the histone 3'-end is required for efficient 3'-end histone mRNA exonuclease activity and degradation of RNA substrates. Also able to degrade the 3'-overhangs of short interfering RNAs (siRNAs) in vitro, suggesting a possible role as regulator of RNA interference (RNAi). Required for binding the 5'-ACCCA-3' sequence present in stem-loop structure. Able to bind other mRNAs. Required for 5.8S rRNA 3'-end processing. Also binds to 5.8s ribosomal RNA. Binds with high affinity to the stem-loop structure of replication-dependent histone pre-mRNAs. In vitro, does not have sequence specificity. In vitro, has weak DNA exonuclease activity. In vitro, shows biphasic kinetics such that there is rapid hydrolysis of the last three unpaired RNA nucleotides in the 39 flanking sequence followed by a much slower cleavage through the stem that occurs over a longer incubation period in the order of hours. ERI1-mediated RNA metabolism plays a key role in chondrogenesis. The chain is 3'-5' exoribonuclease 1 (Eri1) from Mus musculus (Mouse).